The primary structure comprises 402 residues: 3-dehydroquinate synthase (402 aa).

The protein belongs to the archaeal-type DHQ synthase family.

It catalyses the reaction 2-amino-2,3,7-trideoxy-D-lyxo-hept-6-ulosonate + NAD(+) + H2O = 3-dehydroquinate + NH4(+) + NADH + H(+). Its function is as follows. Catalyzes the oxidative deamination and cyclization of 2-amino-3,7-dideoxy-D-threo-hept-6-ulosonic acid (ADH) to yield 3-dehydroquinate (DHQ), which is fed into the canonical shikimic pathway of aromatic amino acid biosynthesis. This chain is 3-dehydroquinate synthase, found in Methanopyrus kandleri (strain AV19 / DSM 6324 / JCM 9639 / NBRC 100938).